Here is a 225-residue protein sequence, read N- to C-terminus: Uracil-DNA glycosylase (225 aa).

The Proton acceptor role is filled by aspartate 65.

The protein belongs to the uracil-DNA glycosylase (UDG) superfamily. UNG family.

It is found in the cytoplasm. It carries out the reaction Hydrolyzes single-stranded DNA or mismatched double-stranded DNA and polynucleotides, releasing free uracil.. Excises uracil residues from the DNA which can arise as a result of misincorporation of dUMP residues by DNA polymerase or due to deamination of cytosine. In Clostridium botulinum (strain Alaska E43 / Type E3), this protein is Uracil-DNA glycosylase.